A 247-amino-acid polypeptide reads, in one-letter code: GTP cyclohydrolase 1 type 2 homolog (247 aa).

Positions 63, 64, 101, 215, and 219 each coordinate a divalent metal cation.

Belongs to the GTP cyclohydrolase I type 2/NIF3 family. In terms of assembly, homohexamer.

The polypeptide is GTP cyclohydrolase 1 type 2 homolog (Yersinia pestis).